The primary structure comprises 88 residues: Large ribosomal subunit protein bL31B (88 aa).

Belongs to the bacterial ribosomal protein bL31 family. Type B subfamily. In terms of assembly, part of the 50S ribosomal subunit.

This is Large ribosomal subunit protein bL31B from Burkholderia orbicola (strain MC0-3).